Reading from the N-terminus, the 246-residue chain is Protein PHLOEM PROTEIN 2-LIKE A1 (246 aa).

As to expression, vascular tissues, specifically in phloem companion cell-sieve element complexes.

This is Protein PHLOEM PROTEIN 2-LIKE A1 (PP2A1) from Arabidopsis thaliana (Mouse-ear cress).